Consider the following 413-residue polypeptide: Exodeoxyribonuclease 7 large subunit (413 aa).

Belongs to the XseA family. As to quaternary structure, heterooligomer composed of large and small subunits.

The protein localises to the cytoplasm. The catalysed reaction is Exonucleolytic cleavage in either 5'- to 3'- or 3'- to 5'-direction to yield nucleoside 5'-phosphates.. Functionally, bidirectionally degrades single-stranded DNA into large acid-insoluble oligonucleotides, which are then degraded further into small acid-soluble oligonucleotides. This Corynebacterium efficiens (strain DSM 44549 / YS-314 / AJ 12310 / JCM 11189 / NBRC 100395) protein is Exodeoxyribonuclease 7 large subunit.